We begin with the raw amino-acid sequence, 859 residues long: Paladin (859 aa).

Positions 1-34 (MGTTASTAQQTVSAGTSLEGLQGGSSSSMDSQHS) are disordered. A lipid anchor (N-myristoyl glycine) is attached at glycine 2. Serine 89 bears the Phosphoserine mark.

Belongs to the paladin family. In terms of tissue distribution, vascular expression detected in the central nervous system, kidney, lung, heart, skeletal muscle, white adipose tissue (WAT), brown adipose tissue, liver, pancreas and spleen. Not expressed in all vessels: for instance, not expressed in capillaries in the brain, and expressed mainly in large vessels in the heart, WAT, liver, pancreas and kidney. Predominant nonvascular expression in myocardium and lung mesenchyme. In large vessels, primarily expressed by smooth muscle cells, but occasionally detected at low levels in the endothelium. Expressed in various cells of the hematopoietic lineage.

Its subcellular location is the cytoplasm. It localises to the cytosol. The chain is Paladin (Pald1) from Mus musculus (Mouse).